A 637-amino-acid polypeptide reads, in one-letter code: MMSYSERLGGPAVSPLPVRGRHMVHGATFAYVPSPQVLHRIPGTSTYAISSLSPVTLTEHSCPCGEVLECHDPLPTKLAQEEEQKPEPRLSQKLAQVGTKLLKVPLMLAFLYLFVCSLDVLSSAFQLAGGKVAGDIFKDNAILSNPVAGLVVGILVTVLVQSSSTSTSIIVSMVSSGLLEVSSAIPIIMGSNIGTSVTNTIVALMQAGDRTDFRRAFAGATVHDCFNWLSVLVLLPLEAATGYLHHVTGLVVASFNIRGGRDAPDLLKVITEPFTRLIIQLDKSVITSIAVGDESLRNHSLIRIWCHPDTTEASTSMSRVEAIGSLANTTMEKCNHIFVDTGLPDLAVGLILLAGSLVVLCTCLILLVKMLNSLLKGQVMSSRRSSTQTDFPAPFTWVTGYFAMVVGASMTFVVQSSSVFTSAITPLIGLGVISIERAYPLTLGSNIGTTTTAILAALASPREKLSSSFQIALCHFFFNISGILLWYPLPCTRLPIRMAKALGKRTAKYRWFAVLYLLVCFLLLPSLVFGISMAGWQAMVGVGTPFGALLAFVVLVNVLQSRSPGHLPKWLQTWDFLPRWMHSLQPLDGLITRATLCYARPEPRSPQLPPRVFLEELPPATPSPRLALPAHHNATRL.

The Cytoplasmic portion of the chain corresponds to methionine 1–lysine 103. Residues serine 14 and serine 34 each carry the phosphoserine modification. The helical transmembrane segment at valine 104–phenylalanine 125 threads the bilayer. The Extracellular portion of the chain corresponds to glutamine 126–asparagine 145. A helical membrane pass occupies residues proline 146 to serine 163. Over serine 164–threonine 165 the chain is Cytoplasmic. A helical membrane pass occupies residues serine 166–isoleucine 185. Residues proline 186–aspartate 345 lie on the Extracellular side of the membrane. 2 disulfides stabilise this stretch: cysteine 225-cysteine 520 and cysteine 306-cysteine 334. 2 N-linked (GlcNAc...) asparagine glycosylation sites follow: asparagine 298 and asparagine 328. The helical transmembrane segment at leucine 346–valine 368 threads the bilayer. Residues lysine 369–methionine 410 are Cytoplasmic-facing. The helical transmembrane segment at threonine 411–serine 434 threads the bilayer. The Extracellular segment spans residues isoleucine 435–lysine 464. A helical membrane pass occupies residues leucine 465–leucine 485. The Cytoplasmic segment spans residues tryptophan 486 to tryptophan 511. Threonine 506 bears the Phosphothreonine; by PKC mark. The helical transmembrane segment at phenylalanine 512–serine 532 threads the bilayer. Residues methionine 533–glutamine 537 are Extracellular-facing. The helical transmembrane segment at alanine 538–leucine 559 threads the bilayer. The Cytoplasmic portion of the chain corresponds to glutamine 560–leucine 637. Residue serine 605 is modified to Phosphoserine. Threonine 621 carries the phosphothreonine modification. The residue at position 623 (serine 623) is a Phosphoserine.

Belongs to the SLC34A transporter family. In terms of assembly, interacts via its C-terminal region with NHERF4. Interacts with NHERF1. Interacts with TMEM174; regulates SLC34A1 internalization by PTH and FGF23. In terms of tissue distribution, kidney.

It localises to the apical cell membrane. Its subcellular location is the cell membrane. The enzyme catalyses 3 Na(+)(out) + phosphate(out) = 3 Na(+)(in) + phosphate(in). Involved in actively transporting phosphate into cells via Na(+) cotransport in the renal brush border membrane. The cotransport has a Na(+):Pi stoichiometry of 3:1 and is electrogenic. In Mus musculus (Mouse), this protein is Sodium-dependent phosphate transport protein 2A.